We begin with the raw amino-acid sequence, 270 residues long: MSKIAKTAIISPKAEIGKGVEIGEFCVIGDHIKLNDGVKLHNNVTLQGHTFIGKNTEIFPFAALGTQPQDLKYKGEYSELIIGEDNLIREFCMINPGTEGGIKKTIIGDKNLLMAYVHVAHDCVIGSHCIFANGVTLAGHIEIGDYVNIGGLTAIHQFVRIAKGCMIAGKSALGKDVPPYCTVEGNRAFIRGLNRHRMRQLLESKDIDFIHVLYKRLFRPVPSLRESAKLELEEHPNNPFVKEICSFILESSRGVAYKSSEYSNEEKQEE.

This sequence belongs to the transferase hexapeptide repeat family. LpxA subfamily. As to quaternary structure, homotrimer.

It is found in the cytoplasm. The catalysed reaction is a (3R)-hydroxyacyl-[ACP] + UDP-N-acetyl-alpha-D-glucosamine = a UDP-3-O-[(3R)-3-hydroxyacyl]-N-acetyl-alpha-D-glucosamine + holo-[ACP]. Its pathway is glycolipid biosynthesis; lipid IV(A) biosynthesis; lipid IV(A) from (3R)-3-hydroxytetradecanoyl-[acyl-carrier-protein] and UDP-N-acetyl-alpha-D-glucosamine: step 1/6. Involved in the biosynthesis of lipid A, a phosphorylated glycolipid that anchors the lipopolysaccharide to the outer membrane of the cell. In Helicobacter pylori (strain Shi470), this protein is Acyl-[acyl-carrier-protein]--UDP-N-acetylglucosamine O-acyltransferase.